The chain runs to 590 residues: MSQGIITKVSGPLVVAEGLPEAKMFDVVKVGNQGLIGEIIEIRGERVSIQVYEETSGLGPGDPVVSTGEPLSVELGPGMLEGIFDGIQRPLDVIEKKVGSFITRGIDVPSLNREKKWKFTPKVKSGDKVSGGDIIGTVQETVIVEHRIMVPPAISGIVEDIREGEYTVTEPIARIKTDSGQIVEITMMQKWPVRKARPYKEKLPPEIPMPTGQRVIDTLFPVTKGGTACIPGPFGSGKTVVQHQLAKWADAEIVVYIGCGERGNEMTDVLLEFPELKDPKTEEPLMKRTVLIANTSNMPVAAREASIYTGITIAEYFRDMGYSVALMADSTSRWAEALREMSGRLEEMPGEEGYPAYLARRLAEFYERAGRVICLGSDNREGALTVVGAVSPPGGDLSEPVTQATLRVVKVFWALDSELAYARHFPAINWLTSYSLYSDVVEDYMNKNVSSDWGELRSEAMRLLQEEASLQEIVRLVGIDALSTRDRLVLEVARSIREDFLHQNAFHEVDTYSSMEKQYRMLKLIMIFYQEAQKALEKGVPFSEIEKHPVREKIARAKYVEESKLTVFDEIEKEIKKAMQGLIEGGAADA.

232–239 (GPFGSGKT) is a binding site for ATP.

The protein belongs to the ATPase alpha/beta chains family.

It catalyses the reaction ATP + H2O + 4 H(+)(in) = ADP + phosphate + 5 H(+)(out). Produces ATP from ADP in the presence of a proton gradient across the membrane. The V-type alpha chain is a catalytic subunit. This is V-type ATP synthase alpha chain from Thermoanaerobacter pseudethanolicus (strain ATCC 33223 / 39E) (Clostridium thermohydrosulfuricum).